We begin with the raw amino-acid sequence, 59 residues long: MSDIEAQRIAARIDTVLDILVAGDYHSAINNLEILRAELLDQVKDGISPSQAPGSPWEI.

The protein belongs to the UPF0509 family.

The protein is UPF0509 protein YciZ of Salmonella agona (strain SL483).